The following is a 657-amino-acid chain: Protein mono-ADP-ribosyltransferase TIPARP (657 aa).

A compositionally biased stretch (acidic residues) spans 1 to 10; sequence MEVETTEPEP. The disordered stretch occupies residues 1 to 22; sequence MEVETTEPEPDCVVQPPSPSDD. Cys39 carries the post-translational modification ADP-ribosylcysteine. Positions 41–48 match the Nuclear localization signal motif; the sequence is KKKQEQKR. A disordered region spans residues 121-154; it reads QLPEAHPSTDAPEQGVPIQDHSFPPETISGTVAD. A C3H1-type zinc finger spans residues 238–265; sequence ENGIEICMDFLQGTCIYGRDCLKHHTVL. Residues 333 to 411 form the WWE domain; sequence STPPCSNSNS…RRPLFRSCFI (79 aa). One can recognise a PARP catalytic domain in the interval 449–657; sequence YPETWVYMHP…YEEVSNTVSI (209 aa).

This sequence belongs to the ARTD/PARP family. Interacts with AHR. In terms of processing, auto-mono-ADP-ribosylated. In terms of tissue distribution, ubiquitously expressed.

It localises to the nucleus. The catalysed reaction is L-aspartyl-[protein] + NAD(+) = 4-O-(ADP-D-ribosyl)-L-aspartyl-[protein] + nicotinamide. The enzyme catalyses L-glutamyl-[protein] + NAD(+) = 5-O-(ADP-D-ribosyl)-L-glutamyl-[protein] + nicotinamide. It carries out the reaction L-cysteinyl-[protein] + NAD(+) = S-(ADP-D-ribosyl)-L-cysteinyl-[protein] + nicotinamide + H(+). ADP-ribosyltransferase that mediates mono-ADP-ribosylation of glutamate, aspartate and cysteine residues on target proteins. Acts as a negative regulator of AHR by mediating mono-ADP-ribosylation of AHR, leading to inhibit transcription activator activity of AHR. The polypeptide is Protein mono-ADP-ribosyltransferase TIPARP (Mus musculus (Mouse)).